Consider the following 160-residue polypeptide: Protein cornichon homolog 2 (160 aa).

The Cytoplasmic portion of the chain corresponds to methionine 1–tyrosine 10. Residues methionine 11–phenylalanine 31 traverse the membrane as a helical segment. At aspartate 32–tyrosine 72 the chain is on the lumenal side. The helical transmembrane segment at serine 73 to leucine 93 threads the bilayer. At asparagine 94–lysine 138 the chain is on the cytoplasmic side. The helical transmembrane segment at leucine 139–serine 159 threads the bilayer. Residue phenylalanine 160 is a topological domain, lumenal.

This sequence belongs to the cornichon family.

It localises to the membrane. Regulates the trafficking and gating properties of AMPA-selective glutamate receptors (AMPARs). This is Protein cornichon homolog 2 (cnih2) from Danio rerio (Zebrafish).